A 334-amino-acid chain; its full sequence is MKEIFLQISNRQDLSQDQVQVVFDRILKNEVSESQIASFLMGLKIKGETSDEITGIVRALKSHATVLPETFTDAMCNCGTGGDQSYSFNISTTACFVLAAGGIRMAKAGNRSISSKSGSADVLEVLGINVAASPEILSKALDEVGLAFIFAQTMHPAMRFIGPARQALGIPTIMNLVGPLANPLDLETQLMGLYRVELQEIVANAIQQLGRKRAVIITGPDNMDEAALYGTNTYTLLEDGHISQHTFTYEDLGMEKVELSDITGGDAKENAEILLSVLRNEASPYLETTVLNIGLGFFANGKAGTIKEGVELARQLIADGSALEKLRKLQEVQV.

5-phospho-alpha-D-ribose 1-diphosphate contacts are provided by residues Gly-79, 82-83 (GD), Ser-87, 89-92 (NIST), 107-115 (KAGNRSISS), and Ser-119. Gly-79 is an anthranilate binding site. Ser-91 serves as a coordination point for Mg(2+). Asn-110 contacts anthranilate. Arg-165 is a binding site for anthranilate. Mg(2+) is bound by residues Asp-224 and Glu-225.

The protein belongs to the anthranilate phosphoribosyltransferase family. In terms of assembly, homodimer. The cofactor is Mg(2+).

The catalysed reaction is N-(5-phospho-beta-D-ribosyl)anthranilate + diphosphate = 5-phospho-alpha-D-ribose 1-diphosphate + anthranilate. The protein operates within amino-acid biosynthesis; L-tryptophan biosynthesis; L-tryptophan from chorismate: step 2/5. Functionally, catalyzes the transfer of the phosphoribosyl group of 5-phosphorylribose-1-pyrophosphate (PRPP) to anthranilate to yield N-(5'-phosphoribosyl)-anthranilate (PRA). The protein is Anthranilate phosphoribosyltransferase of Streptococcus thermophilus (strain ATCC BAA-250 / LMG 18311).